The chain runs to 600 residues: Methylenetetrahydrofolate reductase 2 (600 aa).

The active-site Proton donor/acceptor is the glutamate 22. NAD(+) is bound by residues glutamate 22–lysine 27 and threonine 54–tryptophan 55. Residues threonine 54–tryptophan 55, histidine 84, arginine 114–aspartate 116, tyrosine 133–alanine 134, tyrosine 156, aspartate 171, and lysine 178 contribute to the FAD site. Aspartate 116 provides a ligand contact to substrate. Glutamine 189 and tyrosine 282 together coordinate substrate.

Belongs to the methylenetetrahydrofolate reductase family. FAD is required as a cofactor.

It catalyses the reaction (6S)-5-methyl-5,6,7,8-tetrahydrofolate + NADP(+) = (6R)-5,10-methylene-5,6,7,8-tetrahydrofolate + NADPH + H(+). The protein operates within one-carbon metabolism; tetrahydrofolate interconversion. The protein is Methylenetetrahydrofolate reductase 2 (MET13) of Saccharomyces cerevisiae (strain ATCC 204508 / S288c) (Baker's yeast).